Here is a 1171-residue protein sequence, read N- to C-terminus: Putative tricorn protease homolog 2 (1171 aa).

The disordered stretch occupies residues 432–498 (AGYPPDAGDE…GSPGTPATAG (67 aa)). Composition is skewed to low complexity over residues 444–456 (AGTA…APDA) and 466–498 (IAAG…ATAG). His827 serves as the catalytic Charge relay system. A PDZ-like region spans residues 842–941 (YQRWQGLLGA…RVAVVPLVDE (100 aa)). 1002-1004 (AGG) contacts substrate. Ser1051 (nucleophile) is an active-site residue. 1079 to 1081 (GMT) provides a ligand contact to substrate. Glu1109 acts as the Charge relay system in catalysis. A disordered region spans residues 1149-1171 (PPATPPGYEAVPDRSRPPLPPRE). Over residues 1159 to 1171 (VPDRSRPPLPPRE) the composition is skewed to basic and acidic residues.

The protein belongs to the peptidase S41B family.

The protein localises to the cytoplasm. In terms of biological role, degrades oligopeptides in a sequential manner. The polypeptide is Putative tricorn protease homolog 2 (tri2) (Streptomyces coelicolor (strain ATCC BAA-471 / A3(2) / M145)).